We begin with the raw amino-acid sequence, 598 residues long: MDHIRNFSIIAHIDHGKSTLADRLIQFTGISDERTFKDQMLDNMDIERERGITIKSQAITLPYQAKDGKTYSLNLIDTPGHVDFSYEVSRALASCEGVLLLIDAAQGVQAQTVANLYLAMEHNLEIIPVINKIDLPSADVERVIEQIDDELGLDSEGHLKCSAKAGIGIQDILEAIVKRVPPPRGNPEAPLAALIFDAHYDPFRGTIIHCRIMEGTVKSGDTIRFMSNSATYRVEEVGHFLLQREKRNCLSAGEVGYIIAGVKTVSDVRTGDTITLDDRPCSQPLPGFREVKPVVFASIYPIASDDYDDLKAALEKYQLNDASFIYQKDSSAALGQGFRCGFLGLLHLEVVQERLEREYDQSIILSVPSVRYRFTLKDGSVVYVDNPAHYPGSSSIELSEEPYIRATLMLPERYLGAVMKLCMEKRGVNSTLNYPSPGRVELLYEMPLAEVIYDFYDRFKSVTQGYGSFDYELIDYRESQLVLLDILVNGERVDALSQIVHRDRARARGLQACERLKEEIPRQMFKIAIQGAIGGEIISRTTITPFRKDVIAKCYGGDISRKRKLLEKQKKGKKRMKMIGQVSIPQSAFLSVLKSDAD.

Positions 2-184 (DHIRNFSIIA…AIVKRVPPPR (183 aa)) constitute a tr-type G domain. GTP contacts are provided by residues 14-19 (DHGKST) and 131-134 (NKID).

It belongs to the TRAFAC class translation factor GTPase superfamily. Classic translation factor GTPase family. LepA subfamily.

It localises to the cell inner membrane. The enzyme catalyses GTP + H2O = GDP + phosphate + H(+). Its function is as follows. Required for accurate and efficient protein synthesis under certain stress conditions. May act as a fidelity factor of the translation reaction, by catalyzing a one-codon backward translocation of tRNAs on improperly translocated ribosomes. Back-translocation proceeds from a post-translocation (POST) complex to a pre-translocation (PRE) complex, thus giving elongation factor G a second chance to translocate the tRNAs correctly. Binds to ribosomes in a GTP-dependent manner. This Syntrophus aciditrophicus (strain SB) protein is Elongation factor 4.